A 254-amino-acid polypeptide reads, in one-letter code: Aspartate/glutamate leucyltransferase (254 aa).

The protein belongs to the R-transferase family. Bpt subfamily.

The protein resides in the cytoplasm. It carries out the reaction N-terminal L-glutamyl-[protein] + L-leucyl-tRNA(Leu) = N-terminal L-leucyl-L-glutamyl-[protein] + tRNA(Leu) + H(+). The enzyme catalyses N-terminal L-aspartyl-[protein] + L-leucyl-tRNA(Leu) = N-terminal L-leucyl-L-aspartyl-[protein] + tRNA(Leu) + H(+). In terms of biological role, functions in the N-end rule pathway of protein degradation where it conjugates Leu from its aminoacyl-tRNA to the N-termini of proteins containing an N-terminal aspartate or glutamate. The protein is Aspartate/glutamate leucyltransferase of Xylella fastidiosa (strain 9a5c).